Reading from the N-terminus, the 101-residue chain is A-type ATP synthase subunit F (101 aa).

It belongs to the V-ATPase F subunit family. Has multiple subunits, A(3), B(3), C, D, E, F, G, I and K(x); there may be a few other subunits as well.

It is found in the cell membrane. Its function is as follows. Component of the A-type ATP synthase that produces ATP from ADP in the presence of a proton gradient across the membrane. The sequence is that of A-type ATP synthase subunit F from Methanosarcina mazei (strain ATCC BAA-159 / DSM 3647 / Goe1 / Go1 / JCM 11833 / OCM 88) (Methanosarcina frisia).